An 892-amino-acid polypeptide reads, in one-letter code: Alpha-actinin-1 (892 aa).

N-acetylmethionine is present on M1. Residues 1 to 247 form an actin-binding region; the sequence is MDHYDSQQTN…IMTYVSSFYH (247 aa). At S6 the chain carries Phosphoserine. Phosphotyrosine; by FAK1 is present on Y12. 2 consecutive Calponin-homology (CH) domains span residues 31–135 and 144–250; these read KQQR…LRFA and TSAK…HAFS. Residues K95 and K195 each carry the N6-acetyllysine modification. 4 Spectrin repeats span residues 274–384, 394–499, 509–620, and 630–733; these read QLME…WLLN, HLAE…ALER, QLYL…ALTE, and RLRK…EVEN. An interaction with DDN region spans residues 274–733; that stretch reads QLMEDYEKLA…IARTINEVEN (460 aa). The residue at position 471 (S471) is a Phosphoserine. At K676 the chain carries N6-acetyllysine. S677 carries the post-translational modification Phosphoserine. EF-hand domains are found at residues 746–781 and 787–822; these read EQMN…LGYD and QGEA…ETAD. Positions 759, 761, 763, 765, and 770 each coordinate Ca(2+). Position 890 is a phosphoserine (S890).

It belongs to the alpha-actinin family. Homodimer; antiparallel. Interacts with MYOZ2, TTID and LPP. Interacts with DDN. Interacts with PSD. Interacts with MICALL2. Interacts with DNM2 and CTTN. Interacts with PDLIM1. Interacts with PDLIM2. Interacts with PDLIM4 (via PDZ domain). Interacts with IGSF8.

The protein resides in the cytoplasm. Its subcellular location is the cytoskeleton. The protein localises to the myofibril. It is found in the sarcomere. It localises to the z line. The protein resides in the cell membrane. Its subcellular location is the cell junction. The protein localises to the cell projection. It is found in the ruffle. F-actin cross-linking protein which is thought to anchor actin to a variety of intracellular structures. Association with IGSF8 regulates the immune synapse formation and is required for efficient T-cell activation. This Bos taurus (Bovine) protein is Alpha-actinin-1 (ACTN1).